A 151-amino-acid polypeptide reads, in one-letter code: MKCPYCGYGESKVVDSRATDDKMAIRRRRECLKCNKRYTTYEKIENVPLLVIKKNMSREYFDRTKILNGLMKACQKRPVSRKQIEEIADEVEKKISNSVLTEINSSDIGEMIMESLKKVDEVSYVRFASVYRQFKDINTFMEEIKNLISNR.

A zinc finger spans residues 3–34 (CPYCGYGESKVVDSRATDDKMAIRRRRECLKC). The ATP-cone domain maps to 49–139 (LLVIKKNMSR…VYRQFKDINT (91 aa)).

This sequence belongs to the NrdR family. It depends on Zn(2+) as a cofactor.

Its function is as follows. Negatively regulates transcription of bacterial ribonucleotide reductase nrd genes and operons by binding to NrdR-boxes. The protein is Transcriptional repressor NrdR of Clostridium kluyveri (strain NBRC 12016).